A 264-amino-acid chain; its full sequence is Spermidine/putrescine transport system permease protein PotC (264 aa).

The Cytoplasmic segment spans residues 1-7 (MIGRLLR). Residues 8–27 (GGFMTAIYAYLYIPIIILIV) traverse the membrane as a helical segment. At 28–65 (NSFNSSRFGINWQGFTTKWYSLLMNNDSLLQAAQHSLT) the chain is on the periplasmic side. One can recognise an ABC transmembrane type-1 domain in the interval 60–248 (AQHSLTMAVF…VLSLVMVIAS (189 aa)). A helical transmembrane segment spans residues 66 to 85 (MAVFSATFATLIGSLTAVAL). Residues 86-100 (YRYRFRGKPFVSGML) are Cytoplasmic-facing. The helical transmembrane segment at 101–120 (FVVMMSPDIVMAISLLVLFM) threads the bilayer. The Periplasmic portion of the chain corresponds to 121 to 128 (LLGIQLGF). A helical transmembrane segment spans residues 129–148 (WSLLFSHITFCLPFVVVTVY). The Cytoplasmic portion of the chain corresponds to 149-176 (SRLKGFDVRMLEAAKDLGASEFTILRKI). Residues 177–196 (ILPLAMPAVAAGWVLSFTLS) traverse the membrane as a helical segment. Residues 197-231 (MDDVVVSSFVTGPSYEILPLKIYSMVKVGVSPEVN) lie on the Periplasmic side of the membrane. A helical transmembrane segment spans residues 232-251 (ALATILLVLSLVMVIASQLI). Over 252–264 (ARDKTKGNTGDVK) the chain is Cytoplasmic.

Belongs to the binding-protein-dependent transport system permease family. CysTW subfamily.

The protein localises to the cell inner membrane. Required for the activity of the bacterial periplasmic transport system of putrescine and spermidine. The sequence is that of Spermidine/putrescine transport system permease protein PotC (potC) from Escherichia coli O157:H7.